Consider the following 673-residue polypeptide: DNA ligase (673 aa).

NAD(+)-binding positions include 35–39 (DAQYD), 84–85 (SL), and Glu115. The active-site N6-AMP-lysine intermediate is the Lys117. Residues Arg138, Glu178, Lys294, and Lys318 each coordinate NAD(+). 4 residues coordinate Zn(2+): Cys412, Cys415, Cys430, and Cys435. The BRCT domain occupies 594–673 (LQSDRLAGKS…DELHALLVDE (80 aa)).

It belongs to the NAD-dependent DNA ligase family. LigA subfamily. Mg(2+) is required as a cofactor. The cofactor is Mn(2+).

It catalyses the reaction NAD(+) + (deoxyribonucleotide)n-3'-hydroxyl + 5'-phospho-(deoxyribonucleotide)m = (deoxyribonucleotide)n+m + AMP + beta-nicotinamide D-nucleotide.. Its function is as follows. DNA ligase that catalyzes the formation of phosphodiester linkages between 5'-phosphoryl and 3'-hydroxyl groups in double-stranded DNA using NAD as a coenzyme and as the energy source for the reaction. It is essential for DNA replication and repair of damaged DNA. The chain is DNA ligase from Herpetosiphon aurantiacus (strain ATCC 23779 / DSM 785 / 114-95).